We begin with the raw amino-acid sequence, 377 residues long: Guanine nucleotide-binding protein subunit beta (377 aa).

WD repeat units lie at residues 63–93 (GHTGKVYSLDWTPERNRIVSASQDGRLIVWN), 105–135 (LPCAWVMTCAFSPNGQSVACGGLDSVCSIFS), 154–185 (GHRGYVSCCQYVPNEDAHLITSSGDQTCILWD), 202–233 (GHTADVLSVSISGSNPNWFISGSCDSTARLWD), 246–276 (GHEGDVNTVKFFPDGYRFGTGSDDGTCRLYD), 292–323 (GENGPVTSIAFSVSGRLLFAGYASNNTCYVWD), and 339–369 (SHRNRISCLGLSADGSALCTGSWDSNLKIWA). Short sequence motifs (DWD box) lie at residues 220–235 (FISGSCDSTARLWDTR) and 263–278 (FGTGSDDGTCRLYDIR).

The protein belongs to the WD repeat G protein beta family. In terms of assembly, g proteins are composed of 3 units, alpha, beta and gamma. Interacts with the gamma subunits GG1 and GG2. The dimers GB1-GG1 and GB1-GG2 interact with NDL1, NDL2 and NDL3. Interacts with WNK8. Interacts with XLG2. Interacts with RACK1A, RACK1B and RACK1C. Interacts with ZAR1 (via GBeta-binding domain). In terms of tissue distribution, expressed in seedlings (especially at the hypocotyl/root junction), roots, leaves (restricted to veins and guard cells), and flowers. Also present in hydathods. Expressed in guard cells, mesophyll tissue of cotyledons, trichomes and whole siliques, but not in seeds.

The protein resides in the cell membrane. Its subcellular location is the cytoplasm. It localises to the nucleus. Functionally, guanine nucleotide-binding proteins (G proteins) are involved as a modulator or transducer in various transmembrane signaling systems. The beta and gamma chains are required for the GTPase activity, for replacement of GDP by GTP, and for G protein-effector interaction. The heterotrimeric G-protein controls defense responses to necrotrophic and vascular fungi probably by modulating cell wall-related genes expression (e.g. lower xylose content in cell walls); involved in resistance to fungal pathogens such as Alternaria brassicicola and Fusarium oxysporum. Modulates root architecture (e.g. lateral root formation). Acts with XGL3 in the positive regulation of root waving and root skewing. Involved in the asymmetric division of zygote and specification of apical and basal cell lineages. This chain is Guanine nucleotide-binding protein subunit beta (GB1), found in Arabidopsis thaliana (Mouse-ear cress).